Reading from the N-terminus, the 306-residue chain is Leucine-rich repeat-containing protein 75B (306 aa).

The segment at methionine 1–alanine 22 is disordered. A compositionally biased stretch (low complexity) spans aspartate 12–alanine 22. LRR repeat units follow at residues leucine 173–glutamate 186 and leucine 198–leucine 211.

This sequence belongs to the LRRC75 family.

Functionally, may suppress myogenic differentiation by modulating MYOG expression and Erk1/2 signaling. This is Leucine-rich repeat-containing protein 75B from Mus musculus (Mouse).